A 252-amino-acid chain; its full sequence is tRNA-cytidine(32) 2-sulfurtransferase (252 aa).

A PP-loop motif motif is present at residues Ser-37–Ser-42. [4Fe-4S] cluster contacts are provided by Cys-112, Cys-115, and Cys-202.

It belongs to the TtcA family. In terms of assembly, homodimer. Mg(2+) serves as cofactor. [4Fe-4S] cluster is required as a cofactor.

It is found in the cytoplasm. The catalysed reaction is cytidine(32) in tRNA + S-sulfanyl-L-cysteinyl-[cysteine desulfurase] + AH2 + ATP = 2-thiocytidine(32) in tRNA + L-cysteinyl-[cysteine desulfurase] + A + AMP + diphosphate + H(+). It functions in the pathway tRNA modification. Catalyzes the ATP-dependent 2-thiolation of cytidine in position 32 of tRNA, to form 2-thiocytidine (s(2)C32). The sulfur atoms are provided by the cysteine/cysteine desulfurase (IscS) system. The sequence is that of tRNA-cytidine(32) 2-sulfurtransferase from Geotalea daltonii (strain DSM 22248 / JCM 15807 / FRC-32) (Geobacter daltonii).